An 839-amino-acid chain; its full sequence is Protein translocase subunit SecA (839 aa).

Residues glutamine 85, 103–107 (GEGKT), and aspartate 493 contribute to the ATP site. Residues 780 to 790 (QIHEQERERAS) show a composition bias toward basic and acidic residues. The interval 780 to 839 (QIHEQERERASQRATTAAPQNIQSQQSANTDDLPKVERNEACPCGSGKKFKNCHGRKSFS) is disordered. Polar residues predominate over residues 791-809 (QRATTAAPQNIQSQQSANT). Zn(2+) is bound by residues cysteine 821, cysteine 823, cysteine 832, and histidine 833. The span at 827-839 (KKFKNCHGRKSFS) shows a compositional bias: basic residues.

This sequence belongs to the SecA family. Monomer and homodimer. Part of the essential Sec protein translocation apparatus which comprises SecA, SecYEG and auxiliary proteins SecDF. Other proteins may also be involved. It depends on Zn(2+) as a cofactor.

The protein resides in the cell membrane. Its subcellular location is the cytoplasm. The enzyme catalyses ATP + H2O + cellular proteinSide 1 = ADP + phosphate + cellular proteinSide 2.. Part of the Sec protein translocase complex. Interacts with the SecYEG preprotein conducting channel. Has a central role in coupling the hydrolysis of ATP to the transfer of proteins into and across the cell membrane, serving as an ATP-driven molecular motor driving the stepwise translocation of polypeptide chains across the membrane. This chain is Protein translocase subunit SecA, found in Streptococcus pyogenes serotype M3 (strain ATCC BAA-595 / MGAS315).